Reading from the N-terminus, the 225-residue chain is NAD(P)H-quinone oxidoreductase subunit K, chloroplastic (225 aa).

The [4Fe-4S] cluster site is built by C43, C44, C108, and C139.

The protein belongs to the complex I 20 kDa subunit family. In terms of assembly, NDH is composed of at least 16 different subunits, 5 of which are encoded in the nucleus. [4Fe-4S] cluster is required as a cofactor.

The protein resides in the plastid. The protein localises to the chloroplast thylakoid membrane. It catalyses the reaction a plastoquinone + NADH + (n+1) H(+)(in) = a plastoquinol + NAD(+) + n H(+)(out). The enzyme catalyses a plastoquinone + NADPH + (n+1) H(+)(in) = a plastoquinol + NADP(+) + n H(+)(out). Its function is as follows. NDH shuttles electrons from NAD(P)H:plastoquinone, via FMN and iron-sulfur (Fe-S) centers, to quinones in the photosynthetic chain and possibly in a chloroplast respiratory chain. The immediate electron acceptor for the enzyme in this species is believed to be plastoquinone. Couples the redox reaction to proton translocation, and thus conserves the redox energy in a proton gradient. The chain is NAD(P)H-quinone oxidoreductase subunit K, chloroplastic from Nasturtium officinale (Watercress).